The sequence spans 326 residues: N-acetyl-gamma-glutamyl-phosphate reductase (326 aa).

The active site involves C155.

It belongs to the NAGSA dehydrogenase family. Type 1 subfamily.

It localises to the cytoplasm. The catalysed reaction is N-acetyl-L-glutamate 5-semialdehyde + phosphate + NADP(+) = N-acetyl-L-glutamyl 5-phosphate + NADPH + H(+). Its pathway is amino-acid biosynthesis; L-arginine biosynthesis; N(2)-acetyl-L-ornithine from L-glutamate: step 3/4. Catalyzes the NADPH-dependent reduction of N-acetyl-5-glutamyl phosphate to yield N-acetyl-L-glutamate 5-semialdehyde. The chain is N-acetyl-gamma-glutamyl-phosphate reductase from Shewanella sediminis (strain HAW-EB3).